We begin with the raw amino-acid sequence, 325 residues long: Beta-1,3-galactosyltransferase brn (325 aa).

Topologically, residues 1–7 (MQSKHRK) are cytoplasmic. The chain crosses the membrane as a helical; Signal-anchor for type II membrane protein span at residues 8 to 28 (LLLRCLLVLPLILLVDYCGLL). Over 29-325 (THLHELNFER…WNECRSANYA (297 aa)) the chain is Lumenal. N-linked (GlcNAc...) asparagine glycans are attached at residues Asn-149 and Asn-166.

It belongs to the glycosyltransferase 31 family.

It localises to the golgi apparatus membrane. The enzyme catalyses a ganglioside GM2 (d18:1(4E)) + UDP-alpha-D-galactose = a ganglioside GM1 (d18:1(4E)) + UDP + H(+). Neurogenic protein essential for the development and maintenance of epithelial structure. Required in the germline for establishing the follicular epithelium and for determining the dorsal-ventral polarity. Collaborates with Notch on the apical surface of follicle cells to mediate germline-follicle cell adhesion. Brn has a role in chorion formation. The chain is Beta-1,3-galactosyltransferase brn (brn) from Drosophila melanogaster (Fruit fly).